We begin with the raw amino-acid sequence, 255 residues long: Zinc D-Ala-D-Ala carboxypeptidase (255 aa).

A signal peptide spans 1 to 42; sequence MRPRPIRLLLTALVGAGLAFAPVSAVAAPTATASASADVGAL. Residue D43 is modified to Blocked amino end (Asp). Cystine bridges form between C45/C123 and C136/C184. Position 180 (R180) interacts with substrate. H196 is a binding site for Zn(2+). Cysteines 212 and 253 form a disulfide. H234 functions as the Proton donor in the catalytic mechanism. Zn(2+)-binding residues include H237 and H239.

Belongs to the peptidase M15 family. The cofactor is Zn(2+). In terms of processing, the N-terminus is partially blocked as a result of the cyclization of the first two amino acids into anhydroaspartylglycine imide.

Its subcellular location is the secreted. It catalyses the reaction Cleavage of the bond: (Ac)2-L-lysyl-D-alanyl-|-D-alanine.. Functionally, this enzyme catalyzes carboxypeptidation and transpeptidation reactions involved in bacterial cell wall metabolism. It effectively catalyzes the transfer of the N-alpha, N-epsilon-diacetyl-L-lysyl-D-alanyl electrophilic group of the standard tripeptide substrate N-alpha,N-epsilon-diacetyl-L-lysyl-D-alanyl-D-alanine to water. It also performs a weak beta-lactamase activity, hydrolyzing penicillin into penicilloate at a very low rate. In Streptomyces albus G, this protein is Zinc D-Ala-D-Ala carboxypeptidase.